We begin with the raw amino-acid sequence, 113 residues long: Histone H3-8 (113 aa).

Positions 1 to 17 are enriched in basic residues; sequence NTGAKAPRKHLANKAAR. Residues 1-31 form a disordered region; sequence NTGAKAPRKHLANKAARKTAAPANAGIKKPH.

It belongs to the histone H3 family. In terms of assembly, the nucleosome is a histone octamer containing two molecules each of H2A, H2B, H3 and H4 assembled in one H3-H4 heterotetramer and two H2A-H2B heterodimers. The octamer wraps approximately 147 bp of DNA.

It localises to the nucleus. It is found in the chromosome. In terms of biological role, core component of nucleosome. Nucleosomes wrap and compact DNA into chromatin, limiting DNA accessibility to the cellular machineries which require DNA as a template. Histones thereby play a central role in transcription regulation, DNA repair, DNA replication and chromosomal stability. DNA accessibility is regulated via a complex set of post-translational modifications of histones, also called histone code, and nucleosome remodeling. This is Histone H3-8 (H3-8) from Stylonychia lemnae (Ciliate).